We begin with the raw amino-acid sequence, 233 residues long: Endo-1,4-beta-xylanase 1 (233 aa).

Residues 1–20 form the signal peptide; it reads MVSFTSIVTAVVALAGSALA. N27 is a glycosylation site (N-linked (GlcNAc...) asparagine). The 191-residue stretch at 40-230 folds into the GH11 domain; sequence QSTPSSTGRH…SAGNSNINVQ (191 aa). The active-site Nucleophile is E126. E217 functions as the Proton donor in the catalytic mechanism.

It belongs to the glycosyl hydrolase 11 (cellulase G) family.

It is found in the secreted. It carries out the reaction Endohydrolysis of (1-&gt;4)-beta-D-xylosidic linkages in xylans.. The protein operates within glycan degradation; xylan degradation. Its function is as follows. Endo-1,4-beta-xylanase involved in the hydrolysis of xylan, a major structural heterogeneous polysaccharide found in plant biomass representing the second most abundant polysaccharide in the biosphere, after cellulose. Accounts for approximately 70 percent of the endoxylanase activity in the culture filtrate. This chain is Endo-1,4-beta-xylanase 1 (XYL1), found in Pyricularia grisea (Crabgrass-specific blast fungus).